A 581-amino-acid polypeptide reads, in one-letter code: Proline--tRNA ligase (581 aa).

The protein belongs to the class-II aminoacyl-tRNA synthetase family. ProS type 1 subfamily. In terms of assembly, homodimer.

The protein localises to the cytoplasm. It carries out the reaction tRNA(Pro) + L-proline + ATP = L-prolyl-tRNA(Pro) + AMP + diphosphate. Its function is as follows. Catalyzes the attachment of proline to tRNA(Pro) in a two-step reaction: proline is first activated by ATP to form Pro-AMP and then transferred to the acceptor end of tRNA(Pro). As ProRS can inadvertently accommodate and process non-cognate amino acids such as alanine and cysteine, to avoid such errors it has two additional distinct editing activities against alanine. One activity is designated as 'pretransfer' editing and involves the tRNA(Pro)-independent hydrolysis of activated Ala-AMP. The other activity is designated 'posttransfer' editing and involves deacylation of mischarged Ala-tRNA(Pro). The misacylated Cys-tRNA(Pro) is not edited by ProRS. This Methylibium petroleiphilum (strain ATCC BAA-1232 / LMG 22953 / PM1) protein is Proline--tRNA ligase.